The following is a 169-amino-acid chain: Large ribosomal subunit protein uL10 (169 aa).

It belongs to the universal ribosomal protein uL10 family. Part of the ribosomal stalk of the 50S ribosomal subunit. The N-terminus interacts with L11 and the large rRNA to form the base of the stalk. The C-terminus forms an elongated spine to which L12 dimers bind in a sequential fashion forming a multimeric L10(L12)X complex.

In terms of biological role, forms part of the ribosomal stalk, playing a central role in the interaction of the ribosome with GTP-bound translation factors. This Rickettsia africae (strain ESF-5) protein is Large ribosomal subunit protein uL10.